The primary structure comprises 281 residues: Small ribosomal subunit protein uS2 (281 aa).

Belongs to the universal ribosomal protein uS2 family.

In Chlamydia muridarum (strain MoPn / Nigg), this protein is Small ribosomal subunit protein uS2 (rpsB).